A 186-amino-acid polypeptide reads, in one-letter code: TATA box-binding protein-like 1 (186 aa).

The protein belongs to the TBP family.

Its subcellular location is the cytoplasm. The protein resides in the nucleus. Functionally, part of a specialized transcription system that mediates the transcription of most ribosomal proteins through the 5'-TCT-3' motif which is a core promoter element at these genes. Seems to also mediate the transcription of NF1. Does not bind the TATA box. Members of the TBP family are differentially required to regulate transcription and development during early embryogenesis. The polypeptide is TATA box-binding protein-like 1 (Danio rerio (Zebrafish)).